Reading from the N-terminus, the 313-residue chain is tRNA dimethylallyltransferase (313 aa).

17-24 (GPTASGKT) serves as a coordination point for ATP. Residue 19-24 (TASGKT) participates in substrate binding. Interaction with substrate tRNA regions lie at residues 42–45 (DSAL), 166–170 (QRLSR), and 247–252 (RCVGYR).

Belongs to the IPP transferase family. Monomer. Requires Mg(2+) as cofactor.

It carries out the reaction adenosine(37) in tRNA + dimethylallyl diphosphate = N(6)-dimethylallyladenosine(37) in tRNA + diphosphate. Its function is as follows. Catalyzes the transfer of a dimethylallyl group onto the adenine at position 37 in tRNAs that read codons beginning with uridine, leading to the formation of N6-(dimethylallyl)adenosine (i(6)A). This Pectobacterium atrosepticum (strain SCRI 1043 / ATCC BAA-672) (Erwinia carotovora subsp. atroseptica) protein is tRNA dimethylallyltransferase.